The primary structure comprises 283 residues: uncharacterized protein (283 aa).

An HTH rpiR-type domain is found at 3 to 79 (TGGLAIIQSM…MRVAGDLAKP (77 aa)). Positions 39-58 (VNEISALANSSDAAVIRLCK) form a DNA-binding region, H-T-H motif. The SIS domain maps to 123 to 264 (AVSLLLKAHT…FLGMAAEQYE (142 aa)).

This is an uncharacterized protein from Bacillus subtilis (strain 168).